Consider the following 549-residue polypeptide: Chaperonin GroEL (549 aa).

Residues 30-33 (TLGP), Lys-51, 87-91 (DGTTT), Gly-415, and Asp-496 contribute to the ATP site.

This sequence belongs to the chaperonin (HSP60) family. As to quaternary structure, forms a cylinder of 14 subunits composed of two heptameric rings stacked back-to-back. Interacts with the co-chaperonin GroES.

It is found in the cytoplasm. The catalysed reaction is ATP + H2O + a folded polypeptide = ADP + phosphate + an unfolded polypeptide.. Together with its co-chaperonin GroES, plays an essential role in assisting protein folding. The GroEL-GroES system forms a nano-cage that allows encapsulation of the non-native substrate proteins and provides a physical environment optimized to promote and accelerate protein folding. This chain is Chaperonin GroEL, found in Acidiphilium cryptum (strain JF-5).